The primary structure comprises 365 residues: TD and POZ domain-containing protein 1-like (365 aa).

The MATH domain maps to 19–149 (KFCYKWTISN…EDQLTICCKV (131 aa)). The BTB domain maps to 188–255 (TDCCLLVAGH…IYTGKAPYLH (68 aa)).

It belongs to the Tdpoz family.

The protein is TD and POZ domain-containing protein 1-like of Mus musculus (Mouse).